A 150-amino-acid chain; its full sequence is Endoribonuclease YbeY (150 aa).

Zn(2+)-binding residues include H112, H116, and H122.

The protein belongs to the endoribonuclease YbeY family. Zn(2+) is required as a cofactor.

The protein localises to the cytoplasm. In terms of biological role, single strand-specific metallo-endoribonuclease involved in late-stage 70S ribosome quality control and in maturation of the 3' terminus of the 16S rRNA. This chain is Endoribonuclease YbeY, found in Bdellovibrio bacteriovorus (strain ATCC 15356 / DSM 50701 / NCIMB 9529 / HD100).